A 329-amino-acid chain; its full sequence is GTP 3',8-cyclase (329 aa).

Residues Ala8–Ala234 enclose the Radical SAM core domain. Arg17 contributes to the GTP binding site. Residues Cys24 and Cys28 each coordinate [4Fe-4S] cluster. An S-adenosyl-L-methionine-binding site is contributed by Tyr30. Cys31 contributes to the [4Fe-4S] cluster binding site. Residue Arg68 coordinates GTP. Gly72 serves as a coordination point for S-adenosyl-L-methionine. Residue Thr99 participates in GTP binding. Ser123 serves as a coordination point for S-adenosyl-L-methionine. Lys160 contacts GTP. S-adenosyl-L-methionine is bound at residue Met194. Positions 257 and 260 each coordinate [4Fe-4S] cluster. Arg262–Arg264 is a binding site for GTP. Cys274 provides a ligand contact to [4Fe-4S] cluster.

This sequence belongs to the radical SAM superfamily. MoaA family. As to quaternary structure, monomer and homodimer. Requires [4Fe-4S] cluster as cofactor.

The enzyme catalyses GTP + AH2 + S-adenosyl-L-methionine = (8S)-3',8-cyclo-7,8-dihydroguanosine 5'-triphosphate + 5'-deoxyadenosine + L-methionine + A + H(+). Its pathway is cofactor biosynthesis; molybdopterin biosynthesis. Catalyzes the cyclization of GTP to (8S)-3',8-cyclo-7,8-dihydroguanosine 5'-triphosphate. In Escherichia coli O7:K1 (strain IAI39 / ExPEC), this protein is GTP 3',8-cyclase.